Consider the following 179-residue polypeptide: Large ribosomal subunit protein uL5 (179 aa).

This sequence belongs to the universal ribosomal protein uL5 family. In terms of assembly, part of the 50S ribosomal subunit; part of the 5S rRNA/L5/L18/L25 subcomplex. Contacts the 5S rRNA and the P site tRNA. Forms a bridge to the 30S subunit in the 70S ribosome.

Functionally, this is one of the proteins that bind and probably mediate the attachment of the 5S RNA into the large ribosomal subunit, where it forms part of the central protuberance. In the 70S ribosome it contacts protein S13 of the 30S subunit (bridge B1b), connecting the 2 subunits; this bridge is implicated in subunit movement. Contacts the P site tRNA; the 5S rRNA and some of its associated proteins might help stabilize positioning of ribosome-bound tRNAs. The protein is Large ribosomal subunit protein uL5 of Exiguobacterium sp. (strain ATCC BAA-1283 / AT1b).